A 107-amino-acid polypeptide reads, in one-letter code: uncharacterized protein (107 aa).

A compositionally biased stretch (basic and acidic residues) spans 88–97 (EEKKEKDKGK). Positions 88–107 (EEKKEKDKGKKGLLSRLKFW) are disordered. Positions 98 to 107 (KGLLSRLKFW) are enriched in basic residues.

This is an uncharacterized protein from Methanocaldococcus jannaschii (strain ATCC 43067 / DSM 2661 / JAL-1 / JCM 10045 / NBRC 100440) (Methanococcus jannaschii).